Consider the following 147-residue polypeptide: Hemoglobin subunit gamma (147 aa).

Positions His-3–His-147 constitute a Globin domain. Heme b contacts are provided by His-64 and His-93.

The protein belongs to the globin family. Heterotetramer of two alpha chains and two gamma chains in fetal hemoglobin (Hb F). In terms of tissue distribution, red blood cells.

Its function is as follows. Gamma chains make up the fetal hemoglobin F, in combination with alpha chains. This chain is Hemoglobin subunit gamma (HBG), found in Cephalopachus bancanus (Western tarsier).